Reading from the N-terminus, the 253-residue chain is Sulfate transporter CysZ (253 aa).

The next 4 helical transmembrane spans lie at 31-51, 75-95, 151-171, and 222-242; these read FVILPLLVNILLMGGAFWWLF, LLWPLAVISVLLVFGYFFSTI, IVLLIIYFIPGIGQTVAPVLW, and IPLLNLFIMPVAVCGATAMWV.

The protein belongs to the CysZ family.

Its subcellular location is the cell inner membrane. In terms of biological role, high affinity, high specificity proton-dependent sulfate transporter, which mediates sulfate uptake. Provides the sulfur source for the cysteine synthesis pathway. In Escherichia coli O139:H28 (strain E24377A / ETEC), this protein is Sulfate transporter CysZ.